The chain runs to 489 residues: Cytochrome P450 monooxygenase trt6 (489 aa).

Residues 10-30 (SLWSFGLWILVILSPVLFFAS) traverse the membrane as a helical segment. Residues asparagine 364 and asparagine 407 are each glycosylated (N-linked (GlcNAc...) asparagine). Cysteine 430 provides a ligand contact to heme.

This sequence belongs to the cytochrome P450 family. Heme serves as cofactor.

The protein localises to the membrane. It functions in the pathway secondary metabolite biosynthesis; terpenoid biosynthesis. Cytochrome P450 monooxygenase; part of the gene cluster that mediates the biosynthesis of terretonin, a fungal meroterpenoid that acts as a mycotoxin. The first step of the pathway is the synthesis of 3,5-dimethylorsellinic acid (DMOA) by the polyketide synthase trt4. DMOA is then prenylated into farnesyl-DMOA by the polyprenyl transferase trt2. Methylation by the methyltransferase trt5 then leads to farnesyl-DMOA methyl ester which is further subject to epoxidation by the FAD-dependent monooxygenase trt8 to yield epoxyfarnesyl-DMOA methyl ester. Cyclization of epoxyfarnesyl-DMOA methyl ester by the terpene cyclase trt1 leads to a tetracycle intermediate which is in turn converted to preterretonin. Dehydrogenase trt9 comes next to transform preterretonin to preterrenoid. The FAD-dependent monooxygenase trt3 is then required for the C-hydroxylation at C16 of preterrenoid to yield terrenoid. The cytochrome P450 trt6 catalyzes three successive oxidations to transform terrenoid into an unstable intermediate, which then undergoes the D-ring expansion and unusual rearrangement of the methoxy group to afford the core skeleton of terretonin. Trt14 catalyzes the D-ring expansion of terretonin involving intramolecular methoxy rearrangement as well as the hydrolysis of the expanded D-ring and the methyl ester moiety. Finally, the nonheme iron-dependent dioxygenase trt7 accomplishes the last two oxidation reactions steps to complete the biosynthesis of terretonin. Terretonin C is produced via spontaneous decarboxylation of the terretonin precursor. Another shunt product of the terretonin biosynthesis is dihydrofarnesyl-DMOA, derived from epoxyfarnesyl-DMOA through hydrolysis of the epoxide. The protein is Cytochrome P450 monooxygenase trt6 of Aspergillus terreus (strain NIH 2624 / FGSC A1156).